The chain runs to 59 residues: Cuticle protein 7 isoform b (59 aa).

Q1 carries the pyrrolidone carboxylic acid modification.

This is Cuticle protein 7 isoform b from Limulus polyphemus (Atlantic horseshoe crab).